The chain runs to 126 residues: MPFFGNTFSPKKTPPRKSASLSNLHSLDRSTREVELGLEYGSPTMNLAGQSLKFENGQWIAETGVSGGVDRREVQRLRRRNQQLEEENNLLRLKVDILLDMLSESTAESHLMEKELDELRISRKRK.

Polar residues predominate over residues 1-10 (MPFFGNTFSP). Residues 1–26 (MPFFGNTFSPKKTPPRKSASLSNLHS) form a disordered region. Residues serine 9 and serine 20 each carry the phosphoserine modification. The minimal region for the interaction with PKD2 stretch occupies residues 60 to 112 (IAETGVSGGVDRREVQRLRRRNQQLEEENNLLRLKVDILLDMLSESTAESHLM). Residues 67-125 (GGVDRREVQRLRRRNQQLEEENNLLRLKVDILLDMLSESTAESHLMEKELDELRISRKR) adopt a coiled-coil conformation. A leucine-zipper; mediates homodimerization region spans residues 77 to 98 (LRRRNQQLEEENNLLRLKVDIL).

Belongs to the chibby family. As to quaternary structure, homodimer. Homodimerization is essential for nuclear localization and interaction with KPNA4 but is dispensable for interaction with CTNNB1. Interacts with polycystin-2/PKD2 and GM130. Interacts with the C-terminal region of CTNNB1. Interacts (C-terminus) with TCIM (C-terminus), TCIM competes with CTNNB1 for the interaction with CBY1. Interacts with FAM92A; this interaction facilitates targeting of FAM92A to cilium basal body. Interacts with CIBAR2. Interacts with KPNA4. In terms of tissue distribution, widely expressed. Expressed at higher levels in heart, skeletal muscle, kidney and placenta. Also found in brain, lung, liver and testis. Significantly down-regulated in thyroid and metastatic uterine tumors.

The protein localises to the nucleus speckle. It is found in the cytoplasm. It localises to the cytoskeleton. Its subcellular location is the cilium basal body. The protein resides in the microtubule organizing center. The protein localises to the centrosome. It is found in the centriole. It localises to the golgi apparatus. Its subcellular location is the trans-Golgi network. The protein resides in the cell projection. The protein localises to the cilium. It is found in the flagellum. It localises to the nucleus. In terms of biological role, inhibits the Wnt/Wingless pathway by binding to CTNNB1/beta-catenin and inhibiting beta-catenin-mediated transcriptional activation through competition with TCF/LEF transcription factors. Has also been shown to play a role in regulating the intracellular trafficking of polycystin-2/PKD2 and possibly of other intracellular proteins. Promotes adipocyte and cardiomyocyte differentiation. In Homo sapiens (Human), this protein is Protein chibby homolog 1 (CBY1).